A 241-amino-acid chain; its full sequence is Terpene cyclase terB (241 aa).

Helical transmembrane passes span 19 to 39, 48 to 68, 75 to 95, 114 to 134, and 137 to 157; these read LADTLVAFMGIGWLINYGAMI, YCMGIIPLCNNIGWELVYTLV, VELAVFAAGVTLNVIIMFAAT, LIFLGGTFVCFAGHVALAAEI, and ALAYSWGAVICQLVLSIGGVC. An N-linked (GlcNAc...) asparagine glycan is attached at asparagine 163. 2 consecutive transmembrane segments (helical) span residues 169-189 and 198-218; these read SVTLWLSRFLGSCCTVGFAFL and FAWLAGPLVLWSLATFVLADI.

The protein belongs to the paxB family.

It is found in the membrane. It functions in the pathway secondary metabolite biosynthesis. Its function is as follows. Terpene cyclase; part of the gene cluster that mediates the biosynthesis of terpendoles, indole-diterpene (IDT) mycotoxins including terpendole I, terpendole K, terpendole C, as well as the kinesin Eg5 inhibitor terpendole E. Terpendoles biosynthesis begins with the synthesis of geranylgeranyl diphosphate (GGPP) by a yet unidentified GGPP synthase. Condensation of indole-3-glycerol phosphate with GGPP by the prenyltransferase terC then forms 3-geranylgeranylindole (3-GGI), followed by epoxidation and cyclization of this intermediate (by the FAD-dependent monooxygeanse terM and the terpene cyclase terB) to form paspaline. The cytochrome monooxygenase terQ then hydroxylates paspalline at C-11 to yield terpendole E. The cytochrome monooxygenase terP converts terpendole E to 13-desoxyterpendole I, and terQ converts 13-desoxyterpendole I into terpendole I. TerF and terK are required for conversion of terpendole I to terpendole C which is further converted to terpendole K. The sequence is that of Terpene cyclase terB from Tolypocladium album (Soil fungus).